We begin with the raw amino-acid sequence, 195 residues long: Peroxiredoxin bcp1 (195 aa).

Residues 46-168 form the Thioredoxin domain; the sequence is IQVGDVIPDI…SHWIFEKGTG (123 aa). C89 (cysteine sulfenic acid (-SOH) intermediate) is an active-site residue. C89 and C94 form a disulfide bridge.

Belongs to the peroxiredoxin family. BCP/PrxQ subfamily. Monomer. Post-translationally, the active site is a conserved redox-active cysteine residue, the peroxidatic cysteine (C(P)), which makes the nucleophilic attack on the peroxide substrate. The peroxide oxidizes the C(P)-SH to cysteine sulfenic acid (C(P)-SOH), which then reacts with another cysteine residue, the resolving cysteine (C(R)), to form a disulfide bridge. The disulfide is subsequently reduced by an appropriate electron donor to complete the catalytic cycle. In this atypical 2-Cys peroxiredoxin, C(R) is present in the same subunit to form an intramolecular disulfide. The disulfide is subsequently reduced by thioredoxin.

The protein localises to the cytoplasm. It localises to the nucleus. The catalysed reaction is a hydroperoxide + [thioredoxin]-dithiol = an alcohol + [thioredoxin]-disulfide + H2O. Functionally, thiol-specific peroxidase that catalyzes the reduction of hydrogen peroxide and organic hydroperoxides to water and alcohols, respectively. Plays a role in cell protection against oxidative stress by detoxifying peroxides and as sensor of hydrogen peroxide-mediated signaling events. Acts as a scavenger of H(2)O(2). This is Peroxiredoxin bcp1 (bcp1) from Schizosaccharomyces pombe (strain 972 / ATCC 24843) (Fission yeast).